The following is a 551-amino-acid chain: Fusion glycoprotein F0 (551 aa).

The signal sequence occupies residues 1 to 23 (MHHLHPMIVCIFVMYTGIVGSDA). The Extracellular segment spans residues 24–492 (IAGDQLLNIG…TAKTLYSLSA (469 aa)). 4 N-linked (GlcNAc...) asparagine; by host glycosylation sites follow: Asn65, Asn69, Asn77, and Asn90. 5 disulfide bridges follow: Cys68–Cys189, Cys328–Cys337, Cys352–Cys360, Cys384–Cys389, and Cys391–Cys414. Residues 107 to 131 (FAGVVVGLAALGVATAAQITAAVAI) form a fusion peptide region. A coiled-coil region spans residues 132–160 (VKANANAAAINNLASSIQSTNKAVSDVID). N-linked (GlcNAc...) asparagine; by host glycans are attached at residues Asn431 and Asn461. Positions 456–481 (QINSINKSLKSAEDWIADSNFFANQA) form a coiled coil. The chain crosses the membrane as a helical span at residues 493-513 (IALILSVITLVVVGLLIAYII). Over 514 to 551 (KLVSQIHQFRSLAATTMFHRENPAFFSKNNHGNIYGIS) the chain is Cytoplasmic.

It belongs to the paramyxoviruses fusion glycoprotein family. Homotrimer of disulfide-linked F1-F2. Post-translationally, the inactive precursor F0 is glycosylated and proteolytically cleaved into F1 and F2 to be functionally active. The cleavage is mediated by cellular proteases during the transport and maturation of the polypeptide.

Its subcellular location is the virion membrane. The protein resides in the host cell membrane. Class I viral fusion protein. Under the current model, the protein has at least 3 conformational states: pre-fusion native state, pre-hairpin intermediate state, and post-fusion hairpin state. During viral and plasma cell membrane fusion, the heptad repeat (HR) regions assume a trimer-of-hairpins structure, positioning the fusion peptide in close proximity to the C-terminal region of the ectodomain. The formation of this structure appears to drive apposition and subsequent fusion of viral and plasma cell membranes. Directs fusion of viral and cellular membranes leading to delivery of the nucleocapsid into the cytoplasm. This fusion is pH independent and occurs directly at the outer cell membrane. The trimer of F1-F2 (F protein) probably interacts with HN at the virion surface. Upon HN binding to its cellular receptor, the hydrophobic fusion peptide is unmasked and interacts with the cellular membrane, inducing the fusion between cell and virion membranes. Later in infection, F proteins expressed at the plasma membrane of infected cells could mediate fusion with adjacent cells to form syncytia, a cytopathic effect that could lead to tissue necrosis. This is Fusion glycoprotein F0 (F) from Human parainfluenza 2 virus (strain Greer) (HPIV-2).